Here is a 426-residue protein sequence, read N- to C-terminus: Probable imidazolonepropionase (426 aa).

4-imidazolone-5-propanoate is bound by residues Y158 and H192. Residue Y158 coordinates N-formimidoyl-L-glutamate. H260 is a Fe(3+) binding site. H260 provides a ligand contact to Zn(2+). A 4-imidazolone-5-propanoate-binding site is contributed by E263. D334 lines the Fe(3+) pocket. D334 contributes to the Zn(2+) binding site. N336 is a binding site for N-formimidoyl-L-glutamate.

Belongs to the metallo-dependent hydrolases superfamily. HutI family. Zn(2+) is required as a cofactor. Fe(3+) serves as cofactor.

The enzyme catalyses 4-imidazolone-5-propanoate + H2O = N-formimidoyl-L-glutamate. It functions in the pathway amino-acid degradation; L-histidine degradation into L-glutamate; N-formimidoyl-L-glutamate from L-histidine: step 3/3. In Dictyostelium discoideum (Social amoeba), this protein is Probable imidazolonepropionase (amdhd1).